Reading from the N-terminus, the 310-residue chain is L-lactate dehydrogenase (310 aa).

Residues 10 to 11 (MV), Asp32, Tyr62, and 76 to 77 (GV) contribute to the NAD(+) site. Substrate is bound by residues Gln79, Arg85, and 117–120 (NPVD). Residues 115-117 (ATN) and Ser140 contribute to the NAD(+) site. 145–148 (DTAR) lines the substrate pocket. Residues Arg150 and 162–167 (QSVHAY) contribute to the beta-D-fructose 1,6-bisphosphate site. The active-site Proton acceptor is His172. Position 218 is a phosphotyrosine (Tyr218). Position 227 (Thr227) interacts with substrate.

Belongs to the LDH/MDH superfamily. LDH family. In terms of assembly, homotetramer.

It is found in the cytoplasm. It catalyses the reaction (S)-lactate + NAD(+) = pyruvate + NADH + H(+). The protein operates within fermentation; pyruvate fermentation to lactate; (S)-lactate from pyruvate: step 1/1. With respect to regulation, allosterically activated by fructose 1,6-bisphosphate (FBP). It binds two fructose 1,6-bisphosphate (FBP) molecules per tetramer. Its function is as follows. Catalyzes the conversion of lactate to pyruvate. The chain is L-lactate dehydrogenase from Thermus caldophilus.